Here is a 193-residue protein sequence, read N- to C-terminus: Pyridoxal 5'-phosphate synthase subunit PdxT (193 aa).

Glycine 50–serine 52 serves as a coordination point for L-glutamine. The Nucleophile role is filled by cysteine 82. L-glutamine is bound by residues arginine 109 and isoleucine 136–arginine 137. Catalysis depends on charge relay system residues histidine 172 and glutamate 174.

It belongs to the glutaminase PdxT/SNO family. As to quaternary structure, in the presence of PdxS, forms a dodecamer of heterodimers. Only shows activity in the heterodimer.

It catalyses the reaction aldehydo-D-ribose 5-phosphate + D-glyceraldehyde 3-phosphate + L-glutamine = pyridoxal 5'-phosphate + L-glutamate + phosphate + 3 H2O + H(+). It carries out the reaction L-glutamine + H2O = L-glutamate + NH4(+). It participates in cofactor biosynthesis; pyridoxal 5'-phosphate biosynthesis. Catalyzes the hydrolysis of glutamine to glutamate and ammonia as part of the biosynthesis of pyridoxal 5'-phosphate. The resulting ammonia molecule is channeled to the active site of PdxS. The chain is Pyridoxal 5'-phosphate synthase subunit PdxT from Streptococcus pneumoniae (strain JJA).